The following is a 361-amino-acid chain: 3-dehydroquinate synthase (361 aa).

It belongs to the archaeal-type DHQ synthase family.

It carries out the reaction 2-amino-2,3,7-trideoxy-D-lyxo-hept-6-ulosonate + NAD(+) + H2O = 3-dehydroquinate + NH4(+) + NADH + H(+). In terms of biological role, catalyzes the oxidative deamination and cyclization of 2-amino-3,7-dideoxy-D-threo-hept-6-ulosonic acid (ADH) to yield 3-dehydroquinate (DHQ), which is fed into the canonical shikimic pathway of aromatic amino acid biosynthesis. This chain is 3-dehydroquinate synthase, found in Methanococcus vannielii (strain ATCC 35089 / DSM 1224 / JCM 13029 / OCM 148 / SB).